We begin with the raw amino-acid sequence, 245 residues long: Transmembrane protein 69 (245 aa).

A run of 5 helical transmembrane segments spans residues 97–117, 122–142, 159–179, 185–205, and 216–236; these read ALYITLAGLIPFTAPPLLMVI, IPVLAFTQMAYGAGFLAFLGG, YINLASSMSPILFSWAAILFS, AIVTLIIGLGIALHNELFLLP, and IVSTLVAFISFVVTLILENIY.

The protein resides in the membrane. This is Transmembrane protein 69 (Tmem69) from Mus musculus (Mouse).